The primary structure comprises 202 residues: Putative NADH dehydrogenase/NAD(P)H nitroreductase SCO7141 (202 aa).

This sequence belongs to the nitroreductase family. HadB/RutE subfamily. Requires FMN as cofactor.

The protein is Putative NADH dehydrogenase/NAD(P)H nitroreductase SCO7141 of Streptomyces coelicolor (strain ATCC BAA-471 / A3(2) / M145).